The primary structure comprises 536 residues: Caspase recruitment domain-containing protein 9 (536 aa).

Phosphoserine is present on Ser2. Residues Asp3, Cys10, and His73 each contribute to the Zn(2+) site. In terms of domain architecture, CARD spans 6–98 (NDDECWSTLE…QLYRKVTGKE (93 aa)). Residues 99–116 (PARVFSMIIDASGESGLT) are linker. Residues 117-272 (QLLMTEVMKL…ELQVSVQEGK (156 aa)) are a coiled coil. Lys125 participates in a covalent cross-link: Glycyl lysine isopeptide (Lys-Gly) (interchain with G-Cter in ubiquitin). The residue at position 231 (Thr231) is a Phosphothreonine; by PKC/PRKCD. Ser277 is modified (phosphoserine). The stretch at 303-415 (SLRKDLRQAE…LLAAEGRLKQ (113 aa)) forms a coiled coil. Phosphoserine is present on residues Ser424, Ser425, Ser431, Ser451, Ser461, Ser483, and Ser498. The interval 425–451 (SDLEDSSPRNSQELSLPQDLEEDAQLS) is disordered. The interval 476 to 536 (LTHGMGPSSS…GSDNTDTEGS (61 aa)) is disordered. Positions 487–502 (PPEKERRRLKESFENY) are enriched in basic and acidic residues. Thr531 and Thr533 each carry phosphothreonine; by CK2.

As to quaternary structure, monomer. Homodimer; homodimerization is mediated by the CARD domain which forms an extensive interaction with the adjacent linker and coiled-coil regions; leads to an autoinhibited state. Homomultimer; polymerizes following activation, forming a nucleating helical template that seeds BCL10-filament formation via a CARD-CARD interaction. Interacts (via CARD domain) with BCL10 (via CARD domain); interaction takes place following CARD9 activation and polymerization, leading to the formation of a filamentous CBM complex assembly. Component of a CBM complex (CARD9-BCL10, MALT1), composed of CARD9, BCL10 and MALT1. Interacts with RASGRF1. Interacts with NOD2 (via NACHT domain); interaction is direct. Interacts with RIPK2. Interacts with VHL; without leading to protein degradation. Post-translationally, phosphorylated at Thr-231 by PRKCD downstream of C-type lectin receptors activation: phosphorylation promotes interaction with BCL10, followed by activation of NF-kappa-B and MAP kinase p38 pathways. Phosphorylated at Thr-531 and Thr-531 by CK2 following interaction with VHL, leading to inhibit the ability to activate NF-kappa-B. Ubiquitinated at Lys-125 via 'Lys-27'-linked ubiquitin by TRIM62 downstream of C-type lectin receptors activation; leading to CARD9 activation, followed by activation of NF-kappa-B and MAP kinase p38 pathways. Deubiquitinated at Lys-125 by USP15, inhibiting CARD9. As to expression, specifically expressed in myeloid cells. Not expressed in non-lymphoid organs.

It localises to the cytoplasm. Maintained in an autoinhibited state via homodimerization in which the CARD domain forms an extensive interaction with the adjacent linker and coiled-coil regions. Activation downstream of C-type lectin receptors, by phosphorylation by PRKCD and/or ubiquitination by TRIM62, triggers disruption of the CARD domain-coiled coil interface, CARD9 homooligomerization and BCL10 recruitment, followed by activation of NF-kappa-B and MAP kinase p38 pathways. Zinc-binding inhibits activation by stabilizing the CARD ground-state conformation and restricting its capacity to form BCL10-nucleating filaments. Adapter protein that plays a key role in innate immune response against fungi by forming signaling complexes downstream of C-type lectin receptors. CARD9-mediated signals are essential for antifungal immunity against a subset of fungi from the phylum Ascomycota. Transduces signals in myeloid cells downstream of C-type lectin receptors CLEC7A (dectin-1), CLEC6A (dectin-2) and CLEC4E (Mincle), which detect pathogen-associated molecular pattern metabolites (PAMPs), such as fungal carbohydrates, and trigger CARD9 activation. Upon activation, CARD9 homooligomerizes to form a nucleating helical template that recruits BCL10 via CARD-CARD interaction, thereby promoting polymerization of BCL10 and subsequent recruitment of MALT1: this leads to activation of NF-kappa-B and MAP kinase p38 (MAPK11, MAPK12, MAPK13 and/or MAPK14) pathways which stimulate expression of genes encoding pro-inflammatory cytokines and chemokines. CARD9 signaling in antigen-presenting cells links innate sensing of fungi to the activation of adaptive immunity and provides a cytokine milieu that induces the development and subsequent of interleukin 17-producing T helper (Th17) cells. Also involved in activation of myeloid cells via classical ITAM-associated receptors and TLR: required for TLR-mediated activation of MAPK, while it is not required for TLR-induced activation of NF-kappa-B. CARD9 can also be engaged independently of BCL10: forms a complex with RASGRF1 downstream of C-type lectin receptors, which recruits and activates HRAS, leading to ERK activation and the production of cytokines. Acts as an important regulator of the intestinal commensal fungi (mycobiota) component of the gut microbiota. Plays an essential role in antifungal immunity against dissemination of gut fungi: acts by promoting induction of antifungal IgG antibodies response in CX3CR1(+) macrophages to confer protection against disseminated C.albicans or C.auris infection. Also mediates immunity against other pathogens, such as certain bacteria, viruses and parasites; CARD9 signaling is however redundant with other innate immune responses. In response to L.monocytogenes infection, required for the production of inflammatory cytokines activated by intracellular peptidoglycan: acts by connecting NOD2 recognition of peptidoglycan to downstream activation of MAP kinases (MAPK) without activating NF-kappa-B. The sequence is that of Caspase recruitment domain-containing protein 9 from Mus musculus (Mouse).